A 336-amino-acid polypeptide reads, in one-letter code: MTCTIVVGGQWGDEGKGKIISYICEKDKPSVVARGGVGPNAGHSVEVDGKKYGIRMVPTGFPNRSSKLAVGAGVLVDVDVLLKEVEMLKEFNIKDRVIIDYNCGVIEEKHKEMDKSNSHLSKEIGSTGTGCGPANVDRAMRTLRLAKEFDALKPFLGDVSDLVNEALENGENVLIEGTQGTLLSLYYGSYPYVTSNDTSASAFASDVGIGPTKVDEVIVVFKSYPTRVGEGPFPTEMDVEEAEKLGLVEYGTVTGRRRRIGYFDYDLAKKVCRLNGATAIALTCLDKYDEECHGLTNYDDITEKGLAFIKEIEEKVGVPVKIISTGPELHQTIDIR.

GTP-binding positions include 12–18 and 42–44; these read GDEGKGK and GHS. Aspartate 13 acts as the Proton acceptor in catalysis. Aspartate 13 and glycine 42 together coordinate Mg(2+). Residues 13-16, 40-43, threonine 127, arginine 141, glutamine 179, threonine 194, and arginine 256 each bind IMP; these read DEGK and NAGH. Histidine 43 serves as the catalytic Proton donor. Substrate is bound at residue 252-258; the sequence is TVTGRRR. GTP contacts are provided by residues arginine 258, 284 to 286, and 324 to 326; these read CLD and STG.

Belongs to the adenylosuccinate synthetase family. As to quaternary structure, homodimer. The cofactor is Mg(2+).

It is found in the cytoplasm. It catalyses the reaction IMP + L-aspartate + GTP = N(6)-(1,2-dicarboxyethyl)-AMP + GDP + phosphate + 2 H(+). It functions in the pathway purine metabolism; AMP biosynthesis via de novo pathway; AMP from IMP: step 1/2. Plays an important role in the de novo pathway of purine nucleotide biosynthesis. Catalyzes the first committed step in the biosynthesis of AMP from IMP. The chain is Adenylosuccinate synthetase from Methanococcus aeolicus (strain ATCC BAA-1280 / DSM 17508 / OCM 812 / Nankai-3).